Consider the following 188-residue polypeptide: Thymidine kinase (188 aa).

An ATP-binding site is contributed by 17-24 (GPMFAGKT). Glu-92 (proton acceptor) is an active-site residue. Phe-121 lines the substrate pocket. Zn(2+)-binding residues include Cys-146 and Cys-149. 166 to 170 (LILAG) contacts substrate. Zn(2+) contacts are provided by Cys-179 and Cys-182.

It belongs to the thymidine kinase family.

It carries out the reaction thymidine + ATP = dTMP + ADP + H(+). In terms of biological role, phosphorylates thymidine. ASFV replicates in the cytoplasm of infected cells and contains genes encoding a number of enzymes needed for DNA synthesis, including thymidine kinase. Important for growth in swine macrophages in vitro and is a virus virulence factor in swine. This Ornithodoros (relapsing fever ticks) protein is Thymidine kinase.